A 374-amino-acid chain; its full sequence is Flagellar P-ring protein (374 aa).

The N-terminal stretch at 1 to 29 (MRRVRTTRLFQVACAAIVALASSAMSAHA) is a signal peptide.

It belongs to the FlgI family. As to quaternary structure, the basal body constitutes a major portion of the flagellar organelle and consists of four rings (L,P,S, and M) mounted on a central rod.

The protein resides in the periplasm. Its subcellular location is the bacterial flagellum basal body. In terms of biological role, assembles around the rod to form the L-ring and probably protects the motor/basal body from shearing forces during rotation. This chain is Flagellar P-ring protein, found in Bradyrhizobium sp. (strain BTAi1 / ATCC BAA-1182).